The primary structure comprises 273 residues: Putative pyruvate, phosphate dikinase regulatory protein (273 aa).

Position 149 to 156 (149 to 156) interacts with ADP; the sequence is GPSRTSKT.

This sequence belongs to the pyruvate, phosphate/water dikinase regulatory protein family. PDRP subfamily.

The catalysed reaction is N(tele)-phospho-L-histidyl/L-threonyl-[pyruvate, phosphate dikinase] + ADP = N(tele)-phospho-L-histidyl/O-phospho-L-threonyl-[pyruvate, phosphate dikinase] + AMP + H(+). It carries out the reaction N(tele)-phospho-L-histidyl/O-phospho-L-threonyl-[pyruvate, phosphate dikinase] + phosphate + H(+) = N(tele)-phospho-L-histidyl/L-threonyl-[pyruvate, phosphate dikinase] + diphosphate. Functionally, bifunctional serine/threonine kinase and phosphorylase involved in the regulation of the pyruvate, phosphate dikinase (PPDK) by catalyzing its phosphorylation/dephosphorylation. This Rickettsia typhi (strain ATCC VR-144 / Wilmington) protein is Putative pyruvate, phosphate dikinase regulatory protein.